The sequence spans 393 residues: Formate-dependent phosphoribosylglycinamide formyltransferase (393 aa).

N(1)-(5-phospho-beta-D-ribosyl)glycinamide contacts are provided by residues 22–23 and glutamate 82; that span reads EL. Residues arginine 114, lysine 155, 160–165, 195–198, and glutamate 203 each bind ATP; these read SSGKGQ and EGFI. One can recognise an ATP-grasp domain in the interval 119–308; it reads RLAAEELDLP…QFALHARAIL (190 aa). Mg(2+)-binding residues include glutamate 267 and glutamate 279. Residues aspartate 286, lysine 356, and 363 to 364 contribute to the N(1)-(5-phospho-beta-D-ribosyl)glycinamide site; that span reads RR.

Belongs to the PurK/PurT family. In terms of assembly, homodimer.

The catalysed reaction is N(1)-(5-phospho-beta-D-ribosyl)glycinamide + formate + ATP = N(2)-formyl-N(1)-(5-phospho-beta-D-ribosyl)glycinamide + ADP + phosphate + H(+). The protein operates within purine metabolism; IMP biosynthesis via de novo pathway; N(2)-formyl-N(1)-(5-phospho-D-ribosyl)glycinamide from N(1)-(5-phospho-D-ribosyl)glycinamide (formate route): step 1/1. In terms of biological role, involved in the de novo purine biosynthesis. Catalyzes the transfer of formate to 5-phospho-ribosyl-glycinamide (GAR), producing 5-phospho-ribosyl-N-formylglycinamide (FGAR). Formate is provided by PurU via hydrolysis of 10-formyl-tetrahydrofolate. The protein is Formate-dependent phosphoribosylglycinamide formyltransferase of Pseudomonas putida (strain GB-1).